The following is a 451-amino-acid chain: Trigger factor (451 aa).

The 86-residue stretch at 165 to 250 (DDKLTIDFEG…LHQIQAREAL (86 aa)) folds into the PPIase FKBP-type domain.

This sequence belongs to the FKBP-type PPIase family. Tig subfamily.

It is found in the cytoplasm. The catalysed reaction is [protein]-peptidylproline (omega=180) = [protein]-peptidylproline (omega=0). Its function is as follows. Involved in protein export. Acts as a chaperone by maintaining the newly synthesized protein in an open conformation. Functions as a peptidyl-prolyl cis-trans isomerase. The polypeptide is Trigger factor (Helicobacter pylori (strain G27)).